The following is a 315-amino-acid chain: Glutathione synthetase (315 aa).

Residues 125–310 (KLFTAWFSEF…ITGMLFDAIE (186 aa)) form the ATP-grasp domain. ATP is bound at residue 151–207 (HQAKGDIILKPLDGMGGTSIFRVKQDDPNLGVIIETLTQYGNQYAMAQAFIPEITKG). Glutamate 281 and asparagine 283 together coordinate Mg(2+).

This sequence belongs to the prokaryotic GSH synthase family. Mg(2+) is required as a cofactor. Mn(2+) serves as cofactor.

The catalysed reaction is gamma-L-glutamyl-L-cysteine + glycine + ATP = glutathione + ADP + phosphate + H(+). Its pathway is sulfur metabolism; glutathione biosynthesis; glutathione from L-cysteine and L-glutamate: step 2/2. This is Glutathione synthetase from Shewanella oneidensis (strain ATCC 700550 / JCM 31522 / CIP 106686 / LMG 19005 / NCIMB 14063 / MR-1).